A 1137-amino-acid polypeptide reads, in one-letter code: Morphogenesis-related protein MSB1 (1137 aa).

2 disordered regions span residues 1-59 (MNDM…NSMD) and 483-520 (QLKKKTSAQSPTTEKELPPDDFELEDPPLSKSPTLSQT). Residues 21–50 (SNSPKKAQKTNLSPNKNQNNEKNVPRSNGR) show a composition bias toward polar residues. Residue serine 538 is modified to Phosphoserine. Disordered stretches follow at residues 577–620 (LNNL…EERV), 736–799 (STNT…SDSK), and 814–871 (AVSP…PQFS). Over residues 593 to 608 (FEEKSKDAPIREEYHT) the composition is skewed to basic and acidic residues. The span at 736–749 (STNTNDSCADSSKY) shows a compositional bias: polar residues. The segment covering 750 to 769 (TADRKLAEPRKISEESKVND) has biased composition (basic and acidic residues). A compositionally biased stretch (polar residues) spans 770-796 (DSSSYYSPNINNLPASRMPSQPTYSNS). Residues serine 776 and serine 816 each carry the phosphoserine modification.

Functionally, may play a role in polarity establishment and bud formation. The MSB1 gene may be functionally redundant. This chain is Morphogenesis-related protein MSB1 (MSB1), found in Saccharomyces cerevisiae (strain ATCC 204508 / S288c) (Baker's yeast).